Here is an 894-residue protein sequence, read N- to C-terminus: Protein SEY1 (894 aa).

The segment at 1–64 (MGLDVDSVPI…PRALEPAQVT (64 aa)) is disordered. Residues 1–768 (MGLDVDSVPI…KRGTVSSMSQ (768 aa)) are Cytoplasmic-facing. Positions 9 to 24 (PIAEAAAPSSMAATEP) are enriched in low complexity. The segment covering 40–53 (APMNTDSSRETMPT) has biased composition (polar residues). Residues 137-359 (GFGYDICAVL…DESYVFKTEY (223 aa)) form the GB1/RHD3-type G domain. 147 to 154 (GSQSTGKS) is a binding site for GTP. Residues 536 to 559 (KVDDERAQLLDELHTLARTLRANE) are a coiled coil. Residues 769–789 (VPIWMYGVLVVLGWNEAMAVL) traverse the membrane as a helical segment. The Lumenal portion of the chain corresponds to 790-792 (RNP). A helical transmembrane segment spans residues 793–813 (VYFTLLCMVLATAYVIWRLNL). The Cytoplasmic segment spans residues 814–894 (GTPVLALASG…DSHPRLPASF (81 aa)). The tract at residues 841 to 894 (DGTPPSANRAREYRVPSGSTAHVSEKTPHRPLTTSGAAEADTVEDSHPRLPASF) is disordered.

This sequence belongs to the TRAFAC class dynamin-like GTPase superfamily. GB1/RHD3 GTPase family. RHD3 subfamily.

It localises to the endoplasmic reticulum membrane. Functionally, cooperates with the reticulon proteins and tubule-shaping DP1 family proteins to generate and maintain the structure of the tubular endoplasmic reticulum network. Has GTPase activity, which is required for its function in ER organization. This Malassezia globosa (strain ATCC MYA-4612 / CBS 7966) (Dandruff-associated fungus) protein is Protein SEY1.